The primary structure comprises 156 residues: Histidine-containing phosphotransfer protein 2 (156 aa).

Met1 is subject to N-acetylmethionine. An HPt domain is found at 40 to 147 (SPDFVSEVLS…NLEKQIIQAG (108 aa)). His82 carries the post-translational modification Phosphohistidine.

As to quaternary structure, interacts with the B-type response regulators ARR1, ARR2 and ARR10. Binds to AHK1, AHK2, AHK3, AHK4, AHK5, ETR1 and CKI1. Post-translationally, two-component system major event consists of a His-to-Asp phosphorelay between a sensor histidine kinase (HK) and a response regulator (RR). In plants, the His-to-Asp phosphorelay involves an additional intermediate named Histidine-containing phosphotransfer protein (HPt). This multistep phosphorelay consists of a His-Asp-His-Asp sequential transfer of a phosphate group between first a His and an Asp of the HK protein, followed by the transfer to a conserved His of the HPt protein and finally the transfer to an Asp in the receiver domain of the RR protein. Strongly expressed in flowers and roots. Detected also in leaves, siliques and stems.

It is found in the cytoplasm. It localises to the cytosol. The protein resides in the nucleus. In terms of biological role, functions as a two-component phosphorelay mediators between cytokinin sensor histidine kinases and response regulator (B-type ARRs). Plays an important role in propagating cytokinin signal transduction through the multistep His-to-Asp phosphorelay. In Arabidopsis thaliana (Mouse-ear cress), this protein is Histidine-containing phosphotransfer protein 2 (AHP2).